The following is a 687-amino-acid chain: MAKDLFLEIGCEEIPAGFVPKAMADMELLIKKEFDSARIEYGEIVTLGTPRRLVLAVKGVAERQPDAELTAMGPAKSHAYDADGNPTKAAQGFARGQGIDVSQLKLVTTEKGEYLAAVKSEIGRETAELLPEMLPRLIGNIPFKKSMRWADFDVRFARPIHWIAALFDGKVVPFSFGNIDSGSASRGHRFMANTPFPVRDLAHYLEECERHFVIPDPNKRKEIIRAEIERVAKQAKGNVLPDEALLEQVSYLVEYPSAVHGTFSPDFLVVPREVLITSMREHQRYFSLVDDEGKLLPGFITINNTITEDPQVVVKGNERVLRARLSDARFFFDEDHKVRLETRVESLKSVVYQAKLGTSYEKMERFRELGKRLAQRLNPSVIKQVERAATLCKADLVSGMVGEFPEVQGIMGREYALHDGEEPAVANAIAEHYLPTQAGGELPASDIGAFVSLADKMDTICGCFCVGLIPTGSADPYALRRSALGIINIILEKGYREPLSEFVKASLDLLAAKATRPLAEVQKDVLDFFRGRFVNLMADRFPSDAVEAVASVSFDDLVEAAAKIEALAGFRNRDDFGPLAVAFKRVCNIVKDGVDTPVSAELFQDAAEGELHQALTQVSGKVADALKKADYLAALTEIATLKPAVDLFFEKVMVMADDERVRQNRLALLTGIARLFASLADFSRLSP.

It belongs to the class-II aminoacyl-tRNA synthetase family. As to quaternary structure, tetramer of two alpha and two beta subunits.

The protein localises to the cytoplasm. The catalysed reaction is tRNA(Gly) + glycine + ATP = glycyl-tRNA(Gly) + AMP + diphosphate. This is Glycine--tRNA ligase beta subunit from Geobacter sp. (strain M21).